The sequence spans 758 residues: MTTPQAKPIDSYRKYWASRFGTAPFLPMTRAEMDELGWDSCDIILVTGDCYIDHPSFGMALVGRLLEAQGFRVGIIAQPDWHSADAFRELGKPNLFFGVTAGNMDSMINRYTADRRPRSDDAYTPNAEPNKRPDRAVTVYAQRCREAYPGIGVMIGSIEASLRRIAHYDYWSDKVRQSVLITSKADILLYGNAERALVEIAHRAAKGEKLSEMRDIRGTAFIVPHGWRPDEEWQEMDSSVVDIPGRVDPHLNPYQEIPEQAAEATKGIDPSKPQVIRIESREERLAKRRAERAKTVIRIPAYEAVAHDPVLYAHASRTLHLESNPGNARALVQMHGERDVWLTPPPIPLTTEEMDFVYGLPYARNPHPAYGDAHIPAWEMIKYSVNIMRGCFGGCTFCSITEHEGRIIQSRSEESILHEIEEIRDKTPGFTGHISDLGGPTANMYRLSCKDPKIERSCRKLSCVFPDICENLNTDHSHLIQLYRKARALPGVKKINIQSGLRYDLAVRSPEYIKELVQHHVGGYLKIAPEHTEDGPLSKMMKPGMGAYDKFKELFERFSRQAGKEQYLIPYFIAAHPGTSDEDMMNLALWLKKNNFRLDQVQTFTPTPMAMATTMWHTRRNPLKRLSRSSEKVDVVRDGYRRKLHKAFLRYHHPDNWQIIHDALIQMGRSDLIGHSKHCLIPPTPPGDKAAAVRHKMGAPMNRGKSPGARHPQQGQRAKPAAAVGARGQGGQGGRPGAGKPQAGRSPAKPGGKTSRSR.

In terms of domain architecture, Radical SAM core spans 377–642 (AWEMIKYSVN…VDVVRDGYRR (266 aa)). 3 residues coordinate [4Fe-4S] cluster: C391, C395, and C398. Residues 698 to 758 (GAPMNRGKSP…KPGGKTSRSR (61 aa)) are disordered. Gly residues predominate over residues 727–737 (RGQGGQGGRPG).

This sequence belongs to the UPF0313 family. [4Fe-4S] cluster serves as cofactor.

The polypeptide is UPF0313 protein CV_1738 (Chromobacterium violaceum (strain ATCC 12472 / DSM 30191 / JCM 1249 / CCUG 213 / NBRC 12614 / NCIMB 9131 / NCTC 9757 / MK)).